Consider the following 238-residue polypeptide: Large ribosomal subunit protein uL2 (238 aa).

Residues 201 to 238 (PFGGGGRQHPGRPKTVSRNTPPGRKVGSIAARRTGVGH) form a disordered region.

It belongs to the universal ribosomal protein uL2 family. In terms of assembly, part of the 50S ribosomal subunit. Forms a bridge to the 30S subunit in the 70S ribosome.

Functionally, one of the primary rRNA binding proteins. Required for association of the 30S and 50S subunits to form the 70S ribosome, for tRNA binding and peptide bond formation. It has been suggested to have peptidyltransferase activity; this is somewhat controversial. Makes several contacts with the 16S rRNA in the 70S ribosome. The polypeptide is Large ribosomal subunit protein uL2 (Methanocella arvoryzae (strain DSM 22066 / NBRC 105507 / MRE50)).